The following is a 281-amino-acid chain: Ribose-phosphate pyrophosphokinase (281 aa).

ATP is bound by residues 33-35 (DGE) and 90-91 (RQ). 2 residues coordinate Mg(2+): H123 and D161. K185 is an active-site residue. The D-ribose 5-phosphate site is built by R187 and D211.

It belongs to the ribose-phosphate pyrophosphokinase family. Class III (archaeal) subfamily. It depends on Mg(2+) as a cofactor.

It localises to the cytoplasm. It carries out the reaction D-ribose 5-phosphate + ATP = 5-phospho-alpha-D-ribose 1-diphosphate + AMP + H(+). Its pathway is metabolic intermediate biosynthesis; 5-phospho-alpha-D-ribose 1-diphosphate biosynthesis; 5-phospho-alpha-D-ribose 1-diphosphate from D-ribose 5-phosphate (route I): step 1/1. Its function is as follows. Involved in the biosynthesis of the central metabolite phospho-alpha-D-ribosyl-1-pyrophosphate (PRPP) via the transfer of pyrophosphoryl group from ATP to 1-hydroxyl of ribose-5-phosphate (Rib-5-P). The sequence is that of Ribose-phosphate pyrophosphokinase from Halobacterium salinarum (strain ATCC 29341 / DSM 671 / R1).